The sequence spans 1322 residues: Serine/threonine-protein phosphatase UIS2 (1322 aa).

A signal peptide spans Met-1 to Asn-22. The tract at residues Met-1–Met-535 is interaction with phosphorylated eIF2alpha. Basic and acidic residues-rich tracts occupy residues Glu-267 to Asn-279 and Asn-288 to Asn-326. Disordered stretches follow at residues Glu-267–Asn-326, Asn-613–Asn-646, Asn-1066–Asn-1087, and Glu-1170–Asp-1196. A compositionally biased stretch (low complexity) spans Asn-631–Asn-646.

Mn(2+) serves as cofactor.

It catalyses the reaction O-phospho-L-seryl-[protein] + H2O = L-seryl-[protein] + phosphate. Functionally, protein phosphatase which dephosphorylates 'Ser-59' of translation factor eIF2alpha during the liver stage, thus enabling protein translation. The protein is Serine/threonine-protein phosphatase UIS2 of Plasmodium berghei (strain Anka).